The chain runs to 303 residues: tRNA dimethylallyltransferase 1 (303 aa).

17–24 is a binding site for ATP; sequence GPTACGKT. Residue 19–24 coordinates substrate; sequence TACGKT. Positions 42-45 are interaction with substrate tRNA; it reads DSRQ.

It belongs to the IPP transferase family. Monomer. Requires Mg(2+) as cofactor.

It carries out the reaction adenosine(37) in tRNA + dimethylallyl diphosphate = N(6)-dimethylallyladenosine(37) in tRNA + diphosphate. In terms of biological role, catalyzes the transfer of a dimethylallyl group onto the adenine at position 37 in tRNAs that read codons beginning with uridine, leading to the formation of N6-(dimethylallyl)adenosine (i(6)A). In Hahella chejuensis (strain KCTC 2396), this protein is tRNA dimethylallyltransferase 1.